The following is a 331-amino-acid chain: Protoheme IX farnesyltransferase (331 aa).

Helical transmembrane passes span 63–83, 109–129, 132–152, 160–180, 188–208, 215–235, 241–261, and 294–314; these read LACT…LNCL, SVFI…VSGV, LAAG…TAFL, IVFG…AAAG, WLFS…AILL, VGIP…AISV, VFLS…YGIL, and ILYM…VSIV.

It belongs to the UbiA prenyltransferase family. Protoheme IX farnesyltransferase subfamily.

It localises to the cell inner membrane. The enzyme catalyses heme b + (2E,6E)-farnesyl diphosphate + H2O = Fe(II)-heme o + diphosphate. It functions in the pathway porphyrin-containing compound metabolism; heme O biosynthesis; heme O from protoheme: step 1/1. Converts heme B (protoheme IX) to heme O by substitution of the vinyl group on carbon 2 of heme B porphyrin ring with a hydroxyethyl farnesyl side group. The polypeptide is Protoheme IX farnesyltransferase (Prochlorococcus marinus (strain NATL2A)).